Consider the following 403-residue polypeptide: Tryptophan 2,3-dioxygenase (403 aa).

Residue 69–73 (FIVIH) participates in substrate binding. The PLD motif; required for enzymatic activity signature appears at 133-135 (PLD). Arg140 is a substrate binding site. Residue His327 coordinates heme. Substrate is bound at residue Thr341.

The protein belongs to the tryptophan 2,3-dioxygenase family. Homotetramer. Dimer of dimers. Heme is required as a cofactor. Expressed in body wall muscle cells, hypodermis, PLM neurons and touch-receptor neurons.

The enzyme catalyses L-tryptophan + O2 = N-formyl-L-kynurenine. The protein operates within amino-acid degradation; L-tryptophan degradation via kynurenine pathway; L-kynurenine from L-tryptophan: step 1/2. Heme-dependent dioxygenase that catalyzes the oxidative cleavage of the L-tryptophan (L-Trp) pyrrole ring and converts L-tryptophan to N-formyl-L-kynurenine. Catalyzes the oxidative cleavage of the indole moiety. Involved in regulation of protein homeostasis, longevity and reproducive life span. Specifically regulates proteotoxicity due to age-related aggregation of proteins like alpha-synuclein, via its effects on tryptophan metabolism. This chain is Tryptophan 2,3-dioxygenase, found in Caenorhabditis elegans.